The primary structure comprises 341 residues: UDP-3-O-acylglucosamine N-acyltransferase (341 aa).

The active-site Proton acceptor is histidine 241.

This sequence belongs to the transferase hexapeptide repeat family. LpxD subfamily. Homotrimer.

The catalysed reaction is a UDP-3-O-[(3R)-3-hydroxyacyl]-alpha-D-glucosamine + a (3R)-hydroxyacyl-[ACP] = a UDP-2-N,3-O-bis[(3R)-3-hydroxyacyl]-alpha-D-glucosamine + holo-[ACP] + H(+). The protein operates within bacterial outer membrane biogenesis; LPS lipid A biosynthesis. Its function is as follows. Catalyzes the N-acylation of UDP-3-O-acylglucosamine using 3-hydroxyacyl-ACP as the acyl donor. Is involved in the biosynthesis of lipid A, a phosphorylated glycolipid that anchors the lipopolysaccharide to the outer membrane of the cell. In Mannheimia succiniciproducens (strain KCTC 0769BP / MBEL55E), this protein is UDP-3-O-acylglucosamine N-acyltransferase.